A 352-amino-acid polypeptide reads, in one-letter code: Probable dual-specificity RNA methyltransferase RlmN (352 aa).

Glu-93 acts as the Proton acceptor in catalysis. Residues 99 to 332 (TAKRLTVCVS…ATVRQTRGLD (234 aa)) form the Radical SAM core domain. The cysteines at positions 106 and 337 are disulfide-linked. [4Fe-4S] cluster-binding residues include Cys-113, Cys-117, and Cys-120. S-adenosyl-L-methionine is bound by residues 160–161 (GE), Ser-190, 213–215 (SLH), and Asn-294. Catalysis depends on Cys-337, which acts as the S-methylcysteine intermediate.

The protein belongs to the radical SAM superfamily. RlmN family. [4Fe-4S] cluster is required as a cofactor.

The protein localises to the cytoplasm. It catalyses the reaction adenosine(2503) in 23S rRNA + 2 reduced [2Fe-2S]-[ferredoxin] + 2 S-adenosyl-L-methionine = 2-methyladenosine(2503) in 23S rRNA + 5'-deoxyadenosine + L-methionine + 2 oxidized [2Fe-2S]-[ferredoxin] + S-adenosyl-L-homocysteine. It carries out the reaction adenosine(37) in tRNA + 2 reduced [2Fe-2S]-[ferredoxin] + 2 S-adenosyl-L-methionine = 2-methyladenosine(37) in tRNA + 5'-deoxyadenosine + L-methionine + 2 oxidized [2Fe-2S]-[ferredoxin] + S-adenosyl-L-homocysteine. Functionally, specifically methylates position 2 of adenine 2503 in 23S rRNA and position 2 of adenine 37 in tRNAs. This is Probable dual-specificity RNA methyltransferase RlmN from Synechococcus sp. (strain JA-2-3B'a(2-13)) (Cyanobacteria bacterium Yellowstone B-Prime).